Here is a 471-residue protein sequence, read N- to C-terminus: Actin-related protein 8 (471 aa).

The region spanning 40-86 (LGAFDQLPMDILVQILMMMEPKDAVKLGLTCKAWKCVASGNRLWIFY) is the F-box domain. ATP is bound at residue 256–259 (NIGF).

Belongs to the actin family. Plant ARP8 subfamily. As to expression, ubiquitously expressed in all organs and cell types. Higher expression in seedlings.

Its subcellular location is the nucleus. It localises to the nucleolus. The protein resides in the cytoplasm. This chain is Actin-related protein 8 (ARP8), found in Arabidopsis thaliana (Mouse-ear cress).